We begin with the raw amino-acid sequence, 297 residues long: Putative S-adenosyl-L-methionine-dependent methyltransferase Mmcs_1044 (297 aa).

S-adenosyl-L-methionine-binding positions include Asp124 and 153–154; that span reads DL.

Belongs to the UPF0677 family.

Exhibits S-adenosyl-L-methionine-dependent methyltransferase activity. This is Putative S-adenosyl-L-methionine-dependent methyltransferase Mmcs_1044 from Mycobacterium sp. (strain MCS).